A 517-amino-acid chain; its full sequence is Putative thymidine phosphorylase (517 aa).

It belongs to the thymidine/pyrimidine-nucleoside phosphorylase family. Type 2 subfamily.

The enzyme catalyses thymidine + phosphate = 2-deoxy-alpha-D-ribose 1-phosphate + thymine. In Legionella pneumophila (strain Corby), this protein is Putative thymidine phosphorylase.